Reading from the N-terminus, the 286-residue chain is Polyamine aminopropyltransferase (286 aa).

The 234-residue stretch at 5–238 (TMWHETLHDQ…GIMTFAWATD (234 aa)) folds into the PABS domain. Q33 serves as a coordination point for S-methyl-5'-thioadenosine. The spermidine site is built by H64 and D88. S-methyl-5'-thioadenosine is bound by residues E108 and 140 to 141 (DG). D158 acts as the Proton acceptor in catalysis. 158–161 (DCTD) lines the spermidine pocket. Residue P165 coordinates S-methyl-5'-thioadenosine.

Belongs to the spermidine/spermine synthase family. In terms of assembly, homodimer or homotetramer.

It is found in the cytoplasm. It catalyses the reaction S-adenosyl 3-(methylsulfanyl)propylamine + putrescine = S-methyl-5'-thioadenosine + spermidine + H(+). It functions in the pathway amine and polyamine biosynthesis; spermidine biosynthesis; spermidine from putrescine: step 1/1. Its function is as follows. Catalyzes the irreversible transfer of a propylamine group from the amino donor S-adenosylmethioninamine (decarboxy-AdoMet) to putrescine (1,4-diaminobutane) to yield spermidine. The polypeptide is Polyamine aminopropyltransferase (Salmonella newport (strain SL254)).